The chain runs to 444 residues: F-box/FBD/LRR-repeat protein At5g53840 (444 aa).

In terms of domain architecture, F-box spans 17–63 (EERLSQLPDHLICVILSHLSTKDAVRTSILSTRWRNLWQLVPVLDFD). 11 LRR repeats span residues 103–123 (YYLTSWIDLVTRHRIQHIDIS), 124–150 (VFTCSGFGVIPLSLYTCDTLVHLKLSR), 151–171 (VTMVNVEFVSLPCLKILDLDF), 172–197 (VNFTNETTLDKIISCSPVLEELTIVK), 199–224 (SEDNVKIIQVRSQTLKRVEIHRRFDR), 226–252 (NGLVIDTPLLQFLSIKAHSIKSIEFIN), 273–299 (NRSMTRDFFTTISRVRSLVIRHGTIKD), 300–321 (IFHYMELEPLQQFCYLSELSAV), 322–347 (CSISNLEMLLNLLKSCPKLESLSLKL), 369–396 (VSSLKFVKLESQLLGCGTELKVARYFLE), and 398–423 (STILEKLTLKIDYMYKDEANVNHIRQ). The FBD domain maps to 356 to 408 (EEVMSSTVPPPCLVSSLKFVKLESQLLGCGTELKVARYFLENSTILEKLTLKI).

The chain is F-box/FBD/LRR-repeat protein At5g53840 from Arabidopsis thaliana (Mouse-ear cress).